The sequence spans 415 residues: Calreticulin (415 aa).

A signal peptide spans 1 to 20 (MANPKSLSLFLLSLLAIASA). Asn52 carries an N-linked (GlcNAc...) asparagine glycan. Cysteines 106 and 138 form a disulfide. Tyr110, Lys112, Tyr129, and Asp136 together coordinate an alpha-D-glucoside. Asn152 carries an N-linked (GlcNAc...) asparagine glycan. Tandem repeats lie at residues 192–203 (KQTGSLYTDWDL), 211–222 (DPEAKKPEDWDE), 228–239 (DPEDKKPEGYDD), 246–257 (DPDAKKPEDWDD), 261–271 (GEWTAPTIANP), 275–285 (GPWKPKKIKNP), and 289–299 (GKWKAPMIDNP). Residues 192–257 (KQTGSLYTDW…DAKKPEDWDD (66 aa)) are 4 X approximate repeats. Residues 208–253 (KIKDPEAKKPEDWDEKEYIPDPEDKKPEGYDDIPKEIPDPDAKKPE) are compositionally biased toward basic and acidic residues. The disordered stretch occupies residues 208-276 (KIKDPEAKKP…TIANPEYKGP (69 aa)). Residues 261–299 (GEWTAPTIANPEYKGPWKPKKIKNPNYKGKWKAPMIDNP) form a 3 X approximate repeats region. Position 319 (Glu319) interacts with an alpha-D-glucoside. The span at 347 to 376 (ETWGKNKDAEKAAFEEAEKKKEEEESKDDP) shows a compositional bias: basic and acidic residues. Positions 347–415 (ETWGKNKDAE…DSAEDVHDEL (69 aa)) are disordered. Acidic residues-rich tracts occupy residues 377–397 (ADSDADEDDDDADDTEGEDDG) and 404–415 (AEDSAEDVHDEL). The Prevents secretion from ER signature appears at 412 to 415 (HDEL).

The protein belongs to the calreticulin family.

It localises to the endoplasmic reticulum lumen. In terms of biological role, molecular calcium-binding chaperone promoting folding, oligomeric assembly and quality control in the ER via the calreticulin/calnexin cycle. This lectin may interact transiently with almost all of the monoglucosylated glycoproteins that are synthesized in the ER. In Ricinus communis (Castor bean), this protein is Calreticulin.